A 76-amino-acid polypeptide reads, in one-letter code: Acyl carrier protein (76 aa).

Residues 1–76 (MAIFDDIKEV…DVVRYIETNK (76 aa)) form the Carrier domain. Ser-36 is subject to O-(pantetheine 4'-phosphoryl)serine.

This sequence belongs to the acyl carrier protein (ACP) family. 4'-phosphopantetheine is transferred from CoA to a specific serine of apo-ACP by AcpS. This modification is essential for activity because fatty acids are bound in thioester linkage to the sulfhydryl of the prosthetic group.

It localises to the cytoplasm. The protein operates within lipid metabolism; fatty acid biosynthesis. Carrier of the growing fatty acid chain in fatty acid biosynthesis. The protein is Acyl carrier protein of Wolinella succinogenes (strain ATCC 29543 / DSM 1740 / CCUG 13145 / JCM 31913 / LMG 7466 / NCTC 11488 / FDC 602W) (Vibrio succinogenes).